The primary structure comprises 76 residues: ATP synthase subunit c (76 aa).

The next 2 membrane-spanning stretches (helical) occupy residues 5–25 (GIIAIAAAIAAFTGIGAGIGI) and 54–74 (AALAEATAIYGLVVALVLVFL).

It belongs to the ATPase C chain family. F-type ATPases have 2 components, F(1) - the catalytic core - and F(0) - the membrane proton channel. F(1) has five subunits: alpha(3), beta(3), gamma(1), delta(1), epsilon(1). F(0) has three main subunits: a(1), b(2) and c(10-14). The alpha and beta chains form an alternating ring which encloses part of the gamma chain. F(1) is attached to F(0) by a central stalk formed by the gamma and epsilon chains, while a peripheral stalk is formed by the delta and b chains.

The protein resides in the cell membrane. Functionally, f(1)F(0) ATP synthase produces ATP from ADP in the presence of a proton or sodium gradient. F-type ATPases consist of two structural domains, F(1) containing the extramembraneous catalytic core and F(0) containing the membrane proton channel, linked together by a central stalk and a peripheral stalk. During catalysis, ATP synthesis in the catalytic domain of F(1) is coupled via a rotary mechanism of the central stalk subunits to proton translocation. In terms of biological role, key component of the F(0) channel; it plays a direct role in translocation across the membrane. A homomeric c-ring of between 10-14 subunits forms the central stalk rotor element with the F(1) delta and epsilon subunits. In Ruminiclostridium cellulolyticum (strain ATCC 35319 / DSM 5812 / JCM 6584 / H10) (Clostridium cellulolyticum), this protein is ATP synthase subunit c.